Consider the following 500-residue polypeptide: Glutelin type-B 5 (500 aa).

Residues 1 to 24 form the signal peptide; that stretch reads MATIAFSRLSIYFCVLLLCHGSMA. 2 cysteine pairs are disulfide-bonded: Cys-45–Cys-78 and Cys-121–Cys-310. Cupin type-1 domains are found at residues 50–245 and 316–465; these read LQAF…LVAK and LNIE…EQAR.

This sequence belongs to the 11S seed storage protein (globulins) family. In terms of assembly, hexamer; each subunit is composed of an acidic and a basic chain derived from a single precursor and linked by a disulfide bond.

Functionally, seed storage protein. In Oryza sativa subsp. japonica (Rice), this protein is Glutelin type-B 5 (GLUB5).